We begin with the raw amino-acid sequence, 148 residues long: Large ribosomal subunit protein bL9 (148 aa).

This sequence belongs to the bacterial ribosomal protein bL9 family.

In terms of biological role, binds to the 23S rRNA. This Stutzerimonas stutzeri (strain A1501) (Pseudomonas stutzeri) protein is Large ribosomal subunit protein bL9.